Reading from the N-terminus, the 98-residue chain is NADH-ubiquinone oxidoreductase chain 4L (98 aa).

A run of 3 helical transmembrane segments spans residues 1-21 (MTPI…GLAF), 26-46 (LLSA…ALSL), and 59-79 (APML…ALMV).

This sequence belongs to the complex I subunit 4L family.

Its subcellular location is the mitochondrion membrane. The catalysed reaction is a ubiquinone + NADH + 5 H(+)(in) = a ubiquinol + NAD(+) + 4 H(+)(out). In terms of biological role, core subunit of the mitochondrial membrane respiratory chain NADH dehydrogenase (Complex I) which catalyzes electron transfer from NADH through the respiratory chain, using ubiquinone as an electron acceptor. Part of the enzyme membrane arm which is embedded in the lipid bilayer and involved in proton translocation. The protein is NADH-ubiquinone oxidoreductase chain 4L (MT-ND4L) of Tetraodon nigroviridis (Spotted green pufferfish).